Reading from the N-terminus, the 176-residue chain is SsrA-binding protein (176 aa).

The disordered stretch occupies residues 1 to 33; it reads MTEAGAKKAAGKKSGKGKGKNAKKNQPNITPVA. A compositionally biased stretch (basic residues) spans 9-23; the sequence is AAGKKSGKGKGKNAK.

This sequence belongs to the SmpB family.

The protein resides in the cytoplasm. Functionally, required for rescue of stalled ribosomes mediated by trans-translation. Binds to transfer-messenger RNA (tmRNA), required for stable association of tmRNA with ribosomes. tmRNA and SmpB together mimic tRNA shape, replacing the anticodon stem-loop with SmpB. tmRNA is encoded by the ssrA gene; the 2 termini fold to resemble tRNA(Ala) and it encodes a 'tag peptide', a short internal open reading frame. During trans-translation Ala-aminoacylated tmRNA acts like a tRNA, entering the A-site of stalled ribosomes, displacing the stalled mRNA. The ribosome then switches to translate the ORF on the tmRNA; the nascent peptide is terminated with the 'tag peptide' encoded by the tmRNA and targeted for degradation. The ribosome is freed to recommence translation, which seems to be the essential function of trans-translation. This chain is SsrA-binding protein, found in Rhodopirellula baltica (strain DSM 10527 / NCIMB 13988 / SH1).